The chain runs to 477 residues: Myosin-binding protein H (477 aa).

The interval 1-73 (MMEKNTSEGP…APPSEDVPSA (73 aa)) is disordered. Threonine 6 and threonine 26 each carry phosphothreonine. In terms of domain architecture, Fibronectin type-III 1 spans 73 to 168 (APLLLTLDDV…LDQPIHIREN (96 aa)). One can recognise an Ig-like C2-type 1 domain in the interval 172–260 (PKIRVPRHLR…EDLEAKAVID (89 aa)). A Fibronectin type-III 2 domain is found at 269–364 (PPSSIRLLDV…TKELAHIQKA (96 aa)). Positions 382–466 (PSFTQPLADH…INVLGEASVD (85 aa)) constitute an Ig-like C2-type 2 domain.

This sequence belongs to the immunoglobulin superfamily. MyBP family. Mainly expressed in the skeletal muscle. Slightly expressed in the left atrium and arteria mammaria interna.

Binds to myosin; probably involved in interaction with thick myofilaments in the A-band. This is Myosin-binding protein H (MYBPH) from Homo sapiens (Human).